The following is a 197-amino-acid chain: Ubiquitin-conjugating enzyme E2 T (197 aa).

Positions glutamine 2–arginine 152 constitute a UBC core domain. Cysteine 86 (glycyl thioester intermediate) is an active-site residue. Residues lysine 91 and lysine 182 each participate in a glycyl lysine isopeptide (Lys-Gly) (interchain with G-Cter in ubiquitin) cross-link. Residues lysine 149–valine 197 are disordered. Serine 184 carries the phosphoserine modification. Residues lysine 191 and lysine 192 each participate in a glycyl lysine isopeptide (Lys-Gly) (interchain with G-Cter in SUMO2) cross-link.

Belongs to the ubiquitin-conjugating enzyme family. In terms of assembly, directly interacts with FANCL. Interacts with BRCA1. Post-translationally, auto-ubiquitinated. Effects of auto-monoubiquitination at Lys-91 and Lys-182 are unclear: according to a report, monoubiquitination inactivates E2 enzyme activity. In contrast, according to another report, autoubiquitination does not affect E2 enzyme activity.

It localises to the nucleus. The enzyme catalyses S-ubiquitinyl-[E1 ubiquitin-activating enzyme]-L-cysteine + [E2 ubiquitin-conjugating enzyme]-L-cysteine = [E1 ubiquitin-activating enzyme]-L-cysteine + S-ubiquitinyl-[E2 ubiquitin-conjugating enzyme]-L-cysteine.. It functions in the pathway protein modification; protein ubiquitination. In terms of biological role, accepts ubiquitin from the E1 complex and catalyzes its covalent attachment to other proteins. Catalyzes monoubiquitination. Involved in mitomycin-C (MMC)-induced DNA repair. Acts as a specific E2 ubiquitin-conjugating enzyme for the Fanconi anemia complex by associating with E3 ubiquitin-protein ligase FANCL and catalyzing monoubiquitination of FANCD2, a key step in the DNA damage pathway. Also mediates monoubiquitination of FANCL and FANCI. May contribute to ubiquitination and degradation of BRCA1. In vitro able to promote polyubiquitination using all 7 ubiquitin Lys residues, but may prefer 'Lys-11'-, 'Lys-27'-, 'Lys-48'- and 'Lys-63'-linked polyubiquitination. The chain is Ubiquitin-conjugating enzyme E2 T (UBE2T) from Homo sapiens (Human).